The sequence spans 484 residues: Palmitoyltransferase ZDHHC1 (484 aa).

2 stretches are compositionally biased toward polar residues: residues methionine 1–threonine 11 and threonine 19–glutamine 34. The tract at residues methionine 1–arginine 38 is disordered. The Cytoplasmic segment spans residues methionine 1–glutamine 49. Residues methionine 1 to leucine 268 form a mediates interaction with STING1 region. The helical transmembrane segment at isoleucine 50–leucine 70 threads the bilayer. Topologically, residues leucine 71–histidine 74 are lumenal. Residues tryptophan 75–leucine 95 form a helical membrane-spanning segment. Residues threonine 96–serine 182 lie on the Cytoplasmic side of the membrane. A DHHC domain is found at leucine 131–alanine 181. The active-site S-palmitoyl cysteine intermediate is cysteine 161. Residues alanine 183 to valine 203 traverse the membrane as a helical segment. Residues asparagine 204–proline 238 are Lumenal-facing. Residues alanine 239–glycine 259 traverse the membrane as a helical segment. Residues histidine 260–proline 484 lie on the Cytoplasmic side of the membrane. 2 disordered regions span residues threonine 341 to glycine 415 and leucine 444 to proline 484. The segment covering proline 364 to arginine 374 has biased composition (basic residues). Residues valine 380–glutamate 392 show a composition bias toward basic and acidic residues. The segment covering threonine 395–glycine 415 has biased composition (low complexity). Residues glycine 475–proline 484 are compositionally biased toward gly residues.

The protein belongs to the DHHC palmitoyltransferase family. Interacts with STING1; ZDHHC1 constitutively interacts with STING1 and in presence of DNA viruses activates it by promoting its cGAMP-induced oligomerization and the recruitment of downstream signaling components. Expressed at high levels in fetal lung and heart. Expressed at lower levels in fetal liver and brain. Also detected in adult islet cells of pancreas, Leydig cells of testis, retina and molecular layer of cerebellum.

It is found in the endosome membrane. The protein resides in the endoplasmic reticulum membrane. It localises to the golgi apparatus. It carries out the reaction L-cysteinyl-[protein] + hexadecanoyl-CoA = S-hexadecanoyl-L-cysteinyl-[protein] + CoA. Its function is as follows. Palmitoyltransferase that catalyzes the addition of palmitate onto various protein substrates, such as NCDN and NLRP3. Has a palmitoyltransferase activity toward NCDN and regulates NCDN association with endosome membranes through this palmitoylation. Acts as an activator of the NLRP3 inflammasome by mediating palmitoylation of 'Cys-130' and 'Cys-958' of NLRP3, thereby promoting NLRP3 phosphorylation and activation by NEK7. In terms of biological role, also has a palmitoyltransferase activity-independent function in DNA virus-triggered and CGAS-mediated innate immune response. Functions as an activator of STING1 by promoting its cGAMP-induced oligomerization and the recruitment of downstream signaling components. The polypeptide is Palmitoyltransferase ZDHHC1 (Mus musculus (Mouse)).